The following is a 361-amino-acid chain: Phosphate acyltransferase (361 aa).

Positions 342 to 361 (ADGAAAEQGPTPRRTAPRQT) are disordered.

This sequence belongs to the PlsX family. As to quaternary structure, homodimer. Probably interacts with PlsY.

Its subcellular location is the cytoplasm. The catalysed reaction is a fatty acyl-[ACP] + phosphate = an acyl phosphate + holo-[ACP]. It functions in the pathway lipid metabolism; phospholipid metabolism. Catalyzes the reversible formation of acyl-phosphate (acyl-PO(4)) from acyl-[acyl-carrier-protein] (acyl-ACP). This enzyme utilizes acyl-ACP as fatty acyl donor, but not acyl-CoA. The chain is Phosphate acyltransferase from Anaeromyxobacter sp. (strain K).